The chain runs to 176 residues: Ribonuclease mitogillin (176 aa).

The signal sequence occupies residues 1–27 (MVAIKNLFLLAATAVSVLAAPSPLDAR). Disulfide bonds link cysteine 32-cysteine 174 and cysteine 102-cysteine 158. Residue histidine 76 is part of the active site. The active-site Proton acceptor is the glutamate 122. Histidine 163 functions as the Proton donor in the catalytic mechanism.

It belongs to the ribonuclease U2 family.

Its subcellular location is the secreted. In terms of biological role, this purine-specific ribonuclease cleaves 28S RNA in eukaryotic ribosomes, inhibits protein synthesis, and shows antitumor activity. The polypeptide is Ribonuclease mitogillin (mitF) (Aspergillus fumigatus (strain ATCC MYA-4609 / CBS 101355 / FGSC A1100 / Af293) (Neosartorya fumigata)).